The chain runs to 232 residues: Ashwin (232 aa).

A phosphoserine mark is found at S112, S182, S184, S189, and S193. A disordered region spans residues 163–232 (KMEHNNNDTQ…KRKIQHVTWP (70 aa)). Phosphothreonine is present on residues T197 and T198. Basic and acidic residues predominate over residues 206-224 (APKEEAEATNHLKPPEVKR).

Belongs to the ashwin family. In terms of assembly, component of the tRNA-splicing ligase complex.

Its subcellular location is the nucleus. This chain is Ashwin, found in Mus musculus (Mouse).